We begin with the raw amino-acid sequence, 316 residues long: Methionyl-tRNA formyltransferase (316 aa).

Ser-112–Pro-115 is a binding site for (6S)-5,6,7,8-tetrahydrofolate.

Belongs to the Fmt family.

The catalysed reaction is L-methionyl-tRNA(fMet) + (6R)-10-formyltetrahydrofolate = N-formyl-L-methionyl-tRNA(fMet) + (6S)-5,6,7,8-tetrahydrofolate + H(+). Its function is as follows. Attaches a formyl group to the free amino group of methionyl-tRNA(fMet). The formyl group appears to play a dual role in the initiator identity of N-formylmethionyl-tRNA by promoting its recognition by IF2 and preventing the misappropriation of this tRNA by the elongation apparatus. The sequence is that of Methionyl-tRNA formyltransferase from Glaesserella parasuis serovar 5 (strain SH0165) (Haemophilus parasuis).